Here is a 225-residue protein sequence, read N- to C-terminus: UPF0502 protein Ajs_3392 (225 aa).

It belongs to the UPF0502 family.

The chain is UPF0502 protein Ajs_3392 from Acidovorax sp. (strain JS42).